A 138-amino-acid chain; its full sequence is Ferredoxin-2 (138 aa).

One can recognise a 2Fe-2S ferredoxin-type domain in the interval 27–117; the sequence is ADANLQSTDF…DAKIVYNLKH (91 aa). 4 residues coordinate [2Fe-2S] cluster: C62, C67, C70, and C100.

It belongs to the 2Fe2S plant-type ferredoxin family. Requires [2Fe-2S] cluster as cofactor.

Ferredoxins are iron-sulfur proteins that transfer electrons in a wide variety of metabolic reactions. The chain is Ferredoxin-2 (fer2) from Haloarcula marismortui (strain ATCC 43049 / DSM 3752 / JCM 8966 / VKM B-1809) (Halobacterium marismortui).